A 100-amino-acid chain; its full sequence is MELTPREKDKLLLFTAALVAERRKARGLKLNYPEAVALISAAVLEWARDGRTVAELMHLGTTVLTRADVMEGIPEMIPDIQVEATFPDGTKLVTVHHPIV.

The protein belongs to the urease gamma subunit family. Heterotrimer of UreA (gamma), UreB (beta) and UreC (alpha) subunits. Three heterotrimers associate to form the active enzyme.

The protein localises to the cytoplasm. It catalyses the reaction urea + 2 H2O + H(+) = hydrogencarbonate + 2 NH4(+). The protein operates within nitrogen metabolism; urea degradation; CO(2) and NH(3) from urea (urease route): step 1/1. This chain is Urease subunit gamma, found in Delftia acidovorans (strain DSM 14801 / SPH-1).